Here is a 456-residue protein sequence, read N- to C-terminus: Septin-10 (456 aa).

A Septin-type G domain is found at 40–306; sequence QGFCFNILCV…ELYRRCKLQE (267 aa). The segment at 50 to 57 is G1 motif; that stretch reads GETGIGKS. Residues 50-57, G105, 186-194, G240, and R255 each bind GTP; these read GETGIGKS and KADTISKSE. The tract at residues 102–105 is G3 motif; that stretch reads NTVG. Residues 185-188 are G4 motif; sequence AKAD. A Phosphoserine modification is found at S418.

This sequence belongs to the TRAFAC class TrmE-Era-EngA-EngB-Septin-like GTPase superfamily. Septin GTPase family. In terms of assembly, septins polymerize into heterooligomeric protein complexes that form filaments, and can associate with cellular membranes, actin filaments and microtubules. GTPase activity is required for filament formation. Interacts with ADGB. Post-translationally, proteolytically cleaved in vitro in a calmodulin-dependent manner.

It is found in the cytoplasm. It localises to the cytoskeleton. The protein resides in the cell projection. Its subcellular location is the cilium. The protein localises to the flagellum. Functionally, filament-forming cytoskeletal GTPase. May play a role in cytokinesis (Potential). This is Septin-10 from Rattus norvegicus (Rat).